The sequence spans 298 residues: Glutamyl-Q tRNA(Asp) synthetase (298 aa).

L-glutamate-binding positions include 9–13 and Glu45; that span reads RFAPS. A 'HIGH' region motif is present at residues 12-22; that stretch reads PSPSGELHFGS. Cys101, Cys103, Tyr115, and Cys119 together coordinate Zn(2+). Residues Tyr172 and Arg190 each contribute to the L-glutamate site. A 'KMSKS' region motif is present at residues 228–232; that stretch reads KLSKQ. Lys231 provides a ligand contact to ATP.

The protein belongs to the class-I aminoacyl-tRNA synthetase family. GluQ subfamily. Requires Zn(2+) as cofactor.

Catalyzes the tRNA-independent activation of glutamate in presence of ATP and the subsequent transfer of glutamate onto a tRNA(Asp). Glutamate is transferred on the 2-amino-5-(4,5-dihydroxy-2-cyclopenten-1-yl) moiety of the queuosine in the wobble position of the QUC anticodon. This chain is Glutamyl-Q tRNA(Asp) synthetase, found in Cronobacter sakazakii (strain ATCC BAA-894) (Enterobacter sakazakii).